A 161-amino-acid chain; its full sequence is Endoribonuclease YbeY (161 aa).

Zn(2+)-binding residues include His-121, His-125, and His-131.

It belongs to the endoribonuclease YbeY family. The cofactor is Zn(2+).

It is found in the cytoplasm. Single strand-specific metallo-endoribonuclease involved in late-stage 70S ribosome quality control and in maturation of the 3' terminus of the 16S rRNA. In Stenotrophomonas maltophilia (strain K279a), this protein is Endoribonuclease YbeY.